We begin with the raw amino-acid sequence, 447 residues long: Trigger factor (447 aa).

Positions 164-249 (GNQVTFDFEG…VKLVEKSKLP (86 aa)) constitute a PPIase FKBP-type domain.

This sequence belongs to the FKBP-type PPIase family. Tig subfamily.

It localises to the cytoplasm. It catalyses the reaction [protein]-peptidylproline (omega=180) = [protein]-peptidylproline (omega=0). Its function is as follows. Involved in protein export. Acts as a chaperone by maintaining the newly synthesized protein in an open conformation. Functions as a peptidyl-prolyl cis-trans isomerase. This chain is Trigger factor, found in Psychrobacter arcticus (strain DSM 17307 / VKM B-2377 / 273-4).